The sequence spans 876 residues: MKYFTSEEIRENFLYFFEKKGHKKLPSSSLIPNDPQLLFTVAGMVPFKPIFWGKVEPTYTRITTCQKCLRTNDIENVGRTPRHHTFFEMLGNFSFGDYFKKEAIKWAWEFLTEELGLPAEKLWASVYETDDEAFNIWKDDIKIPENKILRFGKEENWWGPAGQTGPCGPCSEIYFDTGYTENCPDQENCTPACDCGRFVEIWNIVFTEYYSDENGNLSPLPRKNIDTGAGFERICAVTQGKYDNFDSDLFKEIIEEIQRIFGVKFRVNKSKDVSIKVIADHSRAIAFLISEGIIPSNEGRGYVLRRLIRRAVRHGALLEAKGPFLSSILETVIKKMGKIYPELIEKEALIKDISFMEEEKFFETMEKGMERLNNIIQNLNNETTLPGKIAFELYDTYGFPLDLTKEILSEKGIEVDEKEFTELMNKQREMARSASGKVEYDTEKQIYKEIDKFLTPTEFIGYDKLSSTEEVQLIIKGNSIVPQAQEGDEIELFFPKTPFYAERGGQVSDKGVIYNETFEAEVIHVKPIRNEIISHLVKIKKGSIKNGERVFLKVDEKKRKATEKNHTATHLLHSALRKVIGEHIRQAGSYVAPERLRFDFTHYEPLTQDQIKQIEYLINEQIQKAIPVNIYLKSLEEAKSMDVIALFEEKYGEVVRIVEIDDFSRELCGGTHVSNTGEIGLFKILEESSISSGVRRIEAITGFESLNYATELESIMTNLSKMLDSSRDQIPDKIEGILKTIKNQEKEIKQLQFQLATKNIERLAETPQIIEGEKVVVAQLENLEKDVHANTADILLQKLGRGVVILFNKSNNEQVSLVVKVSKDTSKKFHAGNIARKIASYLGGGGGGGPTFAQAGGKYANKVKEVIEHINDFMEV.

H566, H570, C668, and H672 together coordinate Zn(2+).

This sequence belongs to the class-II aminoacyl-tRNA synthetase family. Zn(2+) is required as a cofactor.

The protein localises to the cytoplasm. The catalysed reaction is tRNA(Ala) + L-alanine + ATP = L-alanyl-tRNA(Ala) + AMP + diphosphate. Catalyzes the attachment of alanine to tRNA(Ala) in a two-step reaction: alanine is first activated by ATP to form Ala-AMP and then transferred to the acceptor end of tRNA(Ala). Also edits incorrectly charged Ser-tRNA(Ala) and Gly-tRNA(Ala) via its editing domain. The polypeptide is Alanine--tRNA ligase (Petrotoga mobilis (strain DSM 10674 / SJ95)).